A 294-amino-acid chain; its full sequence is Beta-glucoside kinase (294 aa).

An ATP-binding site is contributed by 5-11 (AFDIGGT).

It belongs to the ROK (NagC/XylR) family.

It carries out the reaction D-cellobiose + ATP = 6-phospho-beta-D-glucosyl-(1-&gt;4)-D-glucose + ADP + H(+). Catalyzes the ATP-dependent phosphorylation of cellobiose to produce cellobiose-6'-P. May have a dual role of kinase and transcriptional regulator of the cellobiose-PTS operon. The protein is Beta-glucoside kinase (bglK) of Listeria monocytogenes serovar 1/2a (strain ATCC BAA-679 / EGD-e).